A 424-amino-acid chain; its full sequence is CAAX prenyl protease 1 homolog (424 aa).

The next 5 helical transmembrane spans lie at 3 to 23, 67 to 87, 109 to 129, 155 to 175, and 185 to 205; these read IPFM…ETYL, EFVT…PWFW, LSFL…FSLY, GTFL…FIVQ, and LWAF…VLIA. A Zn(2+)-binding site is contributed by His-284. Glu-285 is a catalytic residue. Zn(2+) is bound at residue His-288. Helical transmembrane passes span 295–315 and 332–352; these read TYSF…YTLV and VLIG…LVSF. Glu-362 is a Zn(2+) binding site. Residue Asp-366 is the Proton donor of the active site.

The protein belongs to the peptidase M48A family. Requires Zn(2+) as cofactor. As to expression, expressed in leaves, stems and flowers.

The protein localises to the endoplasmic reticulum membrane. The enzyme catalyses Hydrolyzes the peptide bond -P2-(S-farnesyl or geranylgeranyl)C-P1'-P2'-P3'-COOH where P1' and P2' are amino acids with aliphatic side chains and P3' is any C-terminal residue.. Functionally, proteolytically removes the C-terminal three residues of farnesylated proteins. The substrate specificity is only partially overlapping with that of FACE2. This chain is CAAX prenyl protease 1 homolog (FACE1), found in Arabidopsis thaliana (Mouse-ear cress).